Here is a 466-residue protein sequence, read N- to C-terminus: Ribulose bisphosphate carboxylase large chain (466 aa).

Residue Lys5 is modified to N6,N6,N6-trimethyllysine. The substrate site is built by Asn114 and Thr164. The Proton acceptor role is filled by Lys166. Lys168 contributes to the substrate binding site. Positions 192, 194, and 195 each coordinate Mg(2+). At Lys192 the chain carries N6-carboxylysine. The Proton acceptor role is filled by His285. The substrate site is built by Arg286, His318, and Ser370.

The protein belongs to the RuBisCO large chain family. Type I subfamily. In terms of assembly, heterohexadecamer of 8 large chains and 8 small chains; disulfide-linked. The disulfide link is formed within the large subunit homodimers. It depends on Mg(2+) as a cofactor. In terms of processing, the disulfide bond which can form in the large chain dimeric partners within the hexadecamer appears to be associated with oxidative stress and protein turnover.

Its subcellular location is the plastid. The protein localises to the chloroplast. It catalyses the reaction 2 (2R)-3-phosphoglycerate + 2 H(+) = D-ribulose 1,5-bisphosphate + CO2 + H2O. The enzyme catalyses D-ribulose 1,5-bisphosphate + O2 = 2-phosphoglycolate + (2R)-3-phosphoglycerate + 2 H(+). In terms of biological role, ruBisCO catalyzes two reactions: the carboxylation of D-ribulose 1,5-bisphosphate, the primary event in carbon dioxide fixation, as well as the oxidative fragmentation of the pentose substrate in the photorespiration process. Both reactions occur simultaneously and in competition at the same active site. The chain is Ribulose bisphosphate carboxylase large chain from Drosera filiformis (Thread-leaved sundew).